The sequence spans 399 residues: Imidazolonepropionase (399 aa).

His-74 and His-76 together coordinate Fe(3+). Zn(2+) contacts are provided by His-74 and His-76. 4-imidazolone-5-propanoate is bound by residues Arg-83, Tyr-146, and His-176. Residue Tyr-146 coordinates N-formimidoyl-L-glutamate. Fe(3+) is bound at residue His-238. His-238 provides a ligand contact to Zn(2+). Gln-241 serves as a coordination point for 4-imidazolone-5-propanoate. Position 312 (Asp-312) interacts with Fe(3+). Zn(2+) is bound at residue Asp-312. Asn-314 and Gly-316 together coordinate N-formimidoyl-L-glutamate. Ser-317 lines the 4-imidazolone-5-propanoate pocket.

This sequence belongs to the metallo-dependent hydrolases superfamily. HutI family. Requires Zn(2+) as cofactor. Fe(3+) serves as cofactor.

It is found in the cytoplasm. The catalysed reaction is 4-imidazolone-5-propanoate + H2O = N-formimidoyl-L-glutamate. The protein operates within amino-acid degradation; L-histidine degradation into L-glutamate; N-formimidoyl-L-glutamate from L-histidine: step 3/3. Its function is as follows. Catalyzes the hydrolytic cleavage of the carbon-nitrogen bond in imidazolone-5-propanoate to yield N-formimidoyl-L-glutamate. It is the third step in the universal histidine degradation pathway. The chain is Imidazolonepropionase from Deinococcus deserti (strain DSM 17065 / CIP 109153 / LMG 22923 / VCD115).